We begin with the raw amino-acid sequence, 210 residues long: Na(+)-translocating NADH-quinone reductase subunit D (210 aa).

6 consecutive transmembrane segments (helical) span residues 10 to 30 (VLIG…GVCS), 42 to 62 (LVMT…ISLI), 72 to 92 (IIVQ…VLQA), 103 to 123 (VFVG…AYAM), 131 to 151 (FMDG…VGFV), and 178 to 198 (NGLL…IWII).

Belongs to the NqrDE/RnfAE family. As to quaternary structure, composed of six subunits; NqrA, NqrB, NqrC, NqrD, NqrE and NqrF.

The protein localises to the cell inner membrane. It catalyses the reaction a ubiquinone + n Na(+)(in) + NADH + H(+) = a ubiquinol + n Na(+)(out) + NAD(+). Functionally, NQR complex catalyzes the reduction of ubiquinone-1 to ubiquinol by two successive reactions, coupled with the transport of Na(+) ions from the cytoplasm to the periplasm. NqrA to NqrE are probably involved in the second step, the conversion of ubisemiquinone to ubiquinol. The sequence is that of Na(+)-translocating NADH-quinone reductase subunit D from Shewanella pealeana (strain ATCC 700345 / ANG-SQ1).